An 89-amino-acid polypeptide reads, in one-letter code: Small ribosomal subunit protein uS15 (89 aa).

Belongs to the universal ribosomal protein uS15 family. Part of the 30S ribosomal subunit. Forms a bridge to the 50S subunit in the 70S ribosome, contacting the 23S rRNA.

In terms of biological role, one of the primary rRNA binding proteins, it binds directly to 16S rRNA where it helps nucleate assembly of the platform of the 30S subunit by binding and bridging several RNA helices of the 16S rRNA. Functionally, forms an intersubunit bridge (bridge B4) with the 23S rRNA of the 50S subunit in the ribosome. The polypeptide is Small ribosomal subunit protein uS15 (Parafrankia sp. (strain EAN1pec)).